Reading from the N-terminus, the 274-residue chain is Nitrogenase iron protein (274 aa).

Position 8-15 (8-15 (GKGGIGKS)) interacts with ATP. Cys-94 lines the [4Fe-4S] cluster pocket. The residue at position 97 (Arg-97) is an ADP-ribosylarginine; by dinitrogenase reductase ADP-ribosyltransferase. Cys-131 lines the [4Fe-4S] cluster pocket.

The protein belongs to the NifH/BchL/ChlL family. In terms of assembly, homodimer. Requires [4Fe-4S] cluster as cofactor. Post-translationally, the reversible ADP-ribosylation of Arg-97 inactivates the nitrogenase reductase and regulates nitrogenase activity.

It catalyses the reaction N2 + 8 reduced [2Fe-2S]-[ferredoxin] + 16 ATP + 16 H2O = H2 + 8 oxidized [2Fe-2S]-[ferredoxin] + 2 NH4(+) + 16 ADP + 16 phosphate + 6 H(+). In terms of biological role, the key enzymatic reactions in nitrogen fixation are catalyzed by the nitrogenase complex, which has 2 components: the iron protein and the molybdenum-iron protein. This Prosthecochloris aestuarii (strain DSM 271 / SK 413) protein is Nitrogenase iron protein.